Reading from the N-terminus, the 75-residue chain is Conotoxin ar11a (75 aa).

A signal peptide spans 1–19 (MKLCATFLLVLVTLPLVTG). A propeptide spanning residues 20-36 (EKSSERSLSGAILRGVR) is cleaved from the precursor. Cystine bridges form between cysteine 39–cysteine 53, cysteine 46–cysteine 58, cysteine 52–cysteine 63, and cysteine 57–cysteine 70.

As to expression, expressed by the venom duct.

The protein localises to the secreted. Both natural (L-Leu form) and synthetic (D-Leu from) peptides equally cause sensitivity to touch and body tremor. Neither L-Leu form nor D-Leu form is active on nerve-muscle preparation. This chain is Conotoxin ar11a, found in Conus arenatus (Sand-dusted cone).